The following is a 433-amino-acid chain: Tol-Pal system protein TolB (433 aa).

Residues 1–21 (MRNLLRGMLVVICCMAGIAAA) form the signal peptide.

The protein belongs to the TolB family. As to quaternary structure, the Tol-Pal system is composed of five core proteins: the inner membrane proteins TolA, TolQ and TolR, the periplasmic protein TolB and the outer membrane protein Pal. They form a network linking the inner and outer membranes and the peptidoglycan layer.

Its subcellular location is the periplasm. Its function is as follows. Part of the Tol-Pal system, which plays a role in outer membrane invagination during cell division and is important for maintaining outer membrane integrity. In Pseudomonas fluorescens (strain SBW25), this protein is Tol-Pal system protein TolB.